Here is a 39-residue protein sequence, read N- to C-terminus: Photosystem II reaction center protein J (39 aa).

The chain crosses the membrane as a helical span at residues 7-27 (IPLWIVAVVVGLGVVTVVGLF).

This sequence belongs to the PsbJ family. PSII is composed of 1 copy each of membrane proteins PsbA, PsbB, PsbC, PsbD, PsbE, PsbF, PsbH, PsbI, PsbJ, PsbK, PsbL, PsbM, PsbT, PsbX, PsbY, PsbZ, Psb30/Ycf12, peripheral proteins PsbO, CyanoQ (PsbQ), PsbU, PsbV and a large number of cofactors. It forms dimeric complexes.

It is found in the cellular thylakoid membrane. In terms of biological role, one of the components of the core complex of photosystem II (PSII). PSII is a light-driven water:plastoquinone oxidoreductase that uses light energy to abstract electrons from H(2)O, generating O(2) and a proton gradient subsequently used for ATP formation. It consists of a core antenna complex that captures photons, and an electron transfer chain that converts photonic excitation into a charge separation. This is Photosystem II reaction center protein J from Synechococcus sp. (strain JA-3-3Ab) (Cyanobacteria bacterium Yellowstone A-Prime).